A 92-amino-acid chain; its full sequence is Bombyxin A-7 (92 aa).

A signal peptide spans 1–19 (MKLLLAIALMLTIVMWVST). Pyrrolidone carboxylic acid is present on Q20. 3 disulfide bridges follow: C29/C79, C41/C92, and C78/C83. A propeptide spans 50 to 70 (SDAQYASYGSAWLMPYSEGRG) (c peptide like).

This sequence belongs to the insulin family. As to quaternary structure, heterodimer of a B chain and an A chain linked by two disulfide bonds.

The protein localises to the secreted. In terms of biological role, brain peptide responsible for activation of prothoracic glands to produce ecdysone in insects. The protein is Bombyxin A-7 (BBXA7) of Bombyx mori (Silk moth).